A 333-amino-acid polypeptide reads, in one-letter code: Adenosine deaminase (333 aa).

2 residues coordinate Zn(2+): His-12 and His-14. His-14, Asp-16, and Gly-170 together coordinate substrate. Zn(2+) is bound at residue His-197. Glu-200 (proton donor) is an active-site residue. A Zn(2+)-binding site is contributed by Asp-278. Asp-279 is a substrate binding site.

This sequence belongs to the metallo-dependent hydrolases superfamily. Adenosine and AMP deaminases family. Adenosine deaminase subfamily. Requires Zn(2+) as cofactor.

The enzyme catalyses adenosine + H2O + H(+) = inosine + NH4(+). The catalysed reaction is 2'-deoxyadenosine + H2O + H(+) = 2'-deoxyinosine + NH4(+). Catalyzes the hydrolytic deamination of adenosine and 2-deoxyadenosine. The chain is Adenosine deaminase from Pseudoalteromonas translucida (strain TAC 125).